A 208-amino-acid polypeptide reads, in one-letter code: Holliday junction branch migration complex subunit RuvA (208 aa).

The domain I stretch occupies residues methionine 1 to alanine 69. The interval valine 70–threonine 148 is domain II. Residues leucine 149–glutamine 159 form a flexible linker region. The segment at glutamine 159–glutamine 208 is domain III.

The protein belongs to the RuvA family. Homotetramer. Forms an RuvA(8)-RuvB(12)-Holliday junction (HJ) complex. HJ DNA is sandwiched between 2 RuvA tetramers; dsDNA enters through RuvA and exits via RuvB. An RuvB hexamer assembles on each DNA strand where it exits the tetramer. Each RuvB hexamer is contacted by two RuvA subunits (via domain III) on 2 adjacent RuvB subunits; this complex drives branch migration. In the full resolvosome a probable DNA-RuvA(4)-RuvB(12)-RuvC(2) complex forms which resolves the HJ.

The protein resides in the cytoplasm. Functionally, the RuvA-RuvB-RuvC complex processes Holliday junction (HJ) DNA during genetic recombination and DNA repair, while the RuvA-RuvB complex plays an important role in the rescue of blocked DNA replication forks via replication fork reversal (RFR). RuvA specifically binds to HJ cruciform DNA, conferring on it an open structure. The RuvB hexamer acts as an ATP-dependent pump, pulling dsDNA into and through the RuvAB complex. HJ branch migration allows RuvC to scan DNA until it finds its consensus sequence, where it cleaves and resolves the cruciform DNA. This chain is Holliday junction branch migration complex subunit RuvA, found in Acaryochloris marina (strain MBIC 11017).